The primary structure comprises 529 residues: VIN3-like protein 3 (529 aa).

Residues 97-104 (PKRQKRDL) carry the Nuclear localization signal motif. The segment at 137 to 207 (RCSCCICFKY…CFNCVSCGKT (71 aa)) adopts a PHD-type zinc-finger fold. The Nuclear localization signal motif lies at 214 to 221 (LKKQLIIA). Positions 312 to 411 (GSMKIRIESV…FIVSTKTLQD (100 aa)) constitute a Fibronectin type-III domain. The interval 421 to 529 (MSNCNNANKM…AGVSLILLQD (109 aa)) is VIN3-Interacting Domain (VID).

Interacts with VIN3.

It is found in the nucleus. Its function is as follows. Involved in both the vernalization and photoperiod pathways by regulating gene expression. This Arabidopsis thaliana (Mouse-ear cress) protein is VIN3-like protein 3 (VIL3).